Here is a 303-residue protein sequence, read N- to C-terminus: B1 kinase (303 aa).

This sequence belongs to the protein kinase superfamily. Ser/Thr protein kinase family. Poxviruses subfamily. In terms of assembly, interacts with host JIP1; this interaction increases the amount of MAPK bound to JIP1 and subsequently increases the activity of transcription factors, such as JUN, that respond to these complexes. Interacts with protein OPG198; this interaction inhibits the repressive activity of OPG198 pseudokinase on viral replication factory formation. The cofactor is Mg(2+). Autophosphorylated.

The protein resides in the virion. Its subcellular location is the host cytoplasm. It carries out the reaction L-seryl-[protein] + ATP = O-phospho-L-seryl-[protein] + ADP + H(+). The catalysed reaction is L-threonyl-[protein] + ATP = O-phospho-L-threonyl-[protein] + ADP + H(+). Functionally, essential serine/threonine-protein kinase that plays different role in the viral life cycle. Phosphorylates the host small ribosomal protein RACK1 thereby customizing the ribosomes to a state optimal for viral mRNAs (which contain poly-A leaders) but not for host mRNAs. Facilitates viral DNA replication by inhibiting host BANF1, a cellular host defense responsive to foreign DNA. Phosphorylates host BANF1 on serine and threonine residues; this leads to BANF1 relocalization to the cytoplasm, loss of dimerization and impaired DNA binding activity. Indeed, BANF1 activity depends on its DNA-binding property which is blocked by VPK1-mediated phosphorylation. Required for viral intermediate genes expression, probably by inhibiting host BANF1. Modulates cellular responses via host JUN by two different mechanisms, either by direct phosphorylation or by modulation of upstream JIP1-MAPK complexes. Seems to participate in the accumulation/processing of late proteins and thus in virion maturation. In addition, inhibits B12 repressive activity on viral DNA replication via a phosphorylation-dependent mechanism. The sequence is that of B1 kinase (OPG187) from Cynomys gunnisoni (Gunnison's prairie dog).